Consider the following 326-residue polypeptide: Tetraacyldisaccharide 4'-kinase (326 aa).

Residue 53 to 60 (SVGGNGKT) coordinates ATP.

Belongs to the LpxK family.

It catalyses the reaction a lipid A disaccharide + ATP = a lipid IVA + ADP + H(+). It participates in glycolipid biosynthesis; lipid IV(A) biosynthesis; lipid IV(A) from (3R)-3-hydroxytetradecanoyl-[acyl-carrier-protein] and UDP-N-acetyl-alpha-D-glucosamine: step 6/6. Transfers the gamma-phosphate of ATP to the 4'-position of a tetraacyldisaccharide 1-phosphate intermediate (termed DS-1-P) to form tetraacyldisaccharide 1,4'-bis-phosphate (lipid IVA). The protein is Tetraacyldisaccharide 4'-kinase of Actinobacillus pleuropneumoniae serotype 5b (strain L20).